The chain runs to 373 residues: UDP-N-acetylglucosamine--N-acetylmuramyl-(pentapeptide) pyrophosphoryl-undecaprenol N-acetylglucosamine transferase (373 aa).

UDP-N-acetyl-alpha-D-glucosamine contacts are provided by residues 10 to 12, asparagine 124, serine 195, and glutamine 297; that span reads TGG.

The protein belongs to the glycosyltransferase 28 family. MurG subfamily.

It is found in the cell membrane. It catalyses the reaction Mur2Ac(oyl-L-Ala-gamma-D-Glu-L-Lys-D-Ala-D-Ala)-di-trans,octa-cis-undecaprenyl diphosphate + UDP-N-acetyl-alpha-D-glucosamine = beta-D-GlcNAc-(1-&gt;4)-Mur2Ac(oyl-L-Ala-gamma-D-Glu-L-Lys-D-Ala-D-Ala)-di-trans,octa-cis-undecaprenyl diphosphate + UDP + H(+). Its pathway is cell wall biogenesis; peptidoglycan biosynthesis. Its function is as follows. Cell wall formation. Catalyzes the transfer of a GlcNAc subunit on undecaprenyl-pyrophosphoryl-MurNAc-pentapeptide (lipid intermediate I) to form undecaprenyl-pyrophosphoryl-MurNAc-(pentapeptide)GlcNAc (lipid intermediate II). This Oenococcus oeni (strain ATCC BAA-331 / PSU-1) protein is UDP-N-acetylglucosamine--N-acetylmuramyl-(pentapeptide) pyrophosphoryl-undecaprenol N-acetylglucosamine transferase.